A 315-amino-acid polypeptide reads, in one-letter code: Ribosomal RNA small subunit methyltransferase H (315 aa).

S-adenosyl-L-methionine-binding positions include Gly32 to His34, Asp52, Phe78, Asp100, and Gln107.

The protein belongs to the methyltransferase superfamily. RsmH family.

The protein localises to the cytoplasm. It catalyses the reaction cytidine(1402) in 16S rRNA + S-adenosyl-L-methionine = N(4)-methylcytidine(1402) in 16S rRNA + S-adenosyl-L-homocysteine + H(+). Functionally, specifically methylates the N4 position of cytidine in position 1402 (C1402) of 16S rRNA. The sequence is that of Ribosomal RNA small subunit methyltransferase H from Psychromonas ingrahamii (strain DSM 17664 / CCUG 51855 / 37).